The primary structure comprises 248 residues: Cutinase cut1 (248 aa).

Positions 1-17 (MRSLSLFTALLAGQAFA) are cleaved as a signal peptide. An intrachain disulfide couples Cys79 to Cys153. Ser164 (nucleophile) is an active-site residue. The cysteines at positions 212 and 219 are disulfide-linked. Asp216 is an active-site residue. Residue His229 is the Proton donor/acceptor of the active site.

It belongs to the cutinase family. The 2 disulfide bonds play a critical role in holding the catalytic residues in juxta-position; reduction of the disulfide bridges results in the complete inactivation of the enzyme.

The protein localises to the secreted. It catalyses the reaction cutin + H2O = cutin monomers.. Its function is as follows. Catalyzes the hydrolysis of complex carboxylic polyesters found in the cell wall of plants. May degrade cutin, a macromolecule that forms the structure of the plant cuticle. May also degrade suberin, a specialized macromolecule found in the cell wall of various plant tissues. This Trichoderma harzianum (Hypocrea lixii) protein is Cutinase cut1.